Here is a 357-residue protein sequence, read N- to C-terminus: 5-hydroxytryptamine receptor 5A (357 aa).

Residues 1-36 (MDLPVNLTSFSLSTPSPLETNHSLGKDDLRPSSPLL) are Extracellular-facing. Asparagine 6 and asparagine 21 each carry an N-linked (GlcNAc...) asparagine glycan. Residues 37–63 (SVFGVLILTLLGFLVAATFAWNLLVLA) traverse the membrane as a helical segment. The Cytoplasmic portion of the chain corresponds to 64 to 76 (TILRVRTFHRVPH). The helical transmembrane segment at 77-103 (NLVASMAVSDVLVAALVMPLSLVHELS) threads the bilayer. Residues 104–114 (GRRWQLGRRLC) lie on the Extracellular side of the membrane. A disulfide bridge connects residues cysteine 114 and cysteine 192. The helical transmembrane segment at 115–137 (QLWIACDVLCCTASIWNVTAIAL) threads the bilayer. Aspartate 121 is a binding site for serotonin. Over 138 to 155 (DRYWSITRHMEYTLRTRK) the chain is Cytoplasmic. The helical transmembrane segment at 156–176 (CVSNVMIALTWALSAVISLAP) threads the bilayer. At 177–198 (LLFGWGETYSEGSEECQVSREP) the chain is on the extracellular side. A helical transmembrane segment spans residues 199 to 220 (SYAVFSTVGAFYLPLCVVLFVY). Topologically, residues 221-287 (WKIYKAAKFR…QKEQRAALMV (67 aa)) are cytoplasmic. Residues 288–312 (GILIGVFVLCWIPFFLTELISPLCS) form a helical membrane-spanning segment. Residues 313-314 (CD) lie on the Extracellular side of the membrane. Residues 315 to 339 (IPAIWKSIFLWLGYSNSFFNPLIYT) traverse the membrane as a helical segment. Topologically, residues 340–357 (AFNKNYNSAFKNFFSRQH) are cytoplasmic.

It belongs to the G-protein coupled receptor 1 family.

It is found in the cell membrane. Functionally, G-protein coupled receptor for 5-hydroxytryptamine (serotonin), a biogenic hormone that functions as a neurotransmitter, a hormone and a mitogen. Also functions as a receptor for ergot alkaloid derivatives and other psychoactive substances. Ligand binding causes a conformation change that triggers signaling via guanine nucleotide-binding proteins (G proteins) and modulates the activity of downstream effectors. HTR5A is coupled to G(i)/G(o) G alpha proteins and mediates inhibitory neurotransmission: signaling inhibits adenylate cyclase activity and activates a phosphatidylinositol-calcium second messenger system that regulates the release of Ca(2+) ions from intracellular stores. This Homo sapiens (Human) protein is 5-hydroxytryptamine receptor 5A.